The sequence spans 279 residues: Thymidylate synthase (279 aa).

141-142 contributes to the dUMP binding site; that stretch reads RR. The active-site Nucleophile is the Cys-161. Residues 181–184, Asn-192, and 222–224 contribute to the dUMP site; these read RSND and HVY. Asp-184 is a binding site for (6R)-5,10-methylene-5,6,7,8-tetrahydrofolate. Residue Ala-278 coordinates (6R)-5,10-methylene-5,6,7,8-tetrahydrofolate.

It belongs to the thymidylate synthase family. Bacterial-type ThyA subfamily. Homodimer.

The protein resides in the cytoplasm. The catalysed reaction is dUMP + (6R)-5,10-methylene-5,6,7,8-tetrahydrofolate = 7,8-dihydrofolate + dTMP. Its pathway is pyrimidine metabolism; dTTP biosynthesis. In terms of biological role, catalyzes the reductive methylation of 2'-deoxyuridine-5'-monophosphate (dUMP) to 2'-deoxythymidine-5'-monophosphate (dTMP) while utilizing 5,10-methylenetetrahydrofolate (mTHF) as the methyl donor and reductant in the reaction, yielding dihydrofolate (DHF) as a by-product. This enzymatic reaction provides an intracellular de novo source of dTMP, an essential precursor for DNA biosynthesis. The polypeptide is Thymidylate synthase (Bacillus subtilis subsp. natto).